The following is a 182-amino-acid chain: RNA pyrophosphohydrolase (182 aa).

The 144-residue stretch at 6-149 folds into the Nudix hydrolase domain; that stretch reads GYRPNVGIIL…KRLVYEQALN (144 aa). Positions 38-59 match the Nudix box motif; sequence GGIKRGETPEEAMFRELYEEVG. The tract at residues 162–182 is disordered; the sequence is PRHKKEQEPFSDVVDSVRSEE.

Belongs to the Nudix hydrolase family. RppH subfamily. Requires a divalent metal cation as cofactor.

Its function is as follows. Accelerates the degradation of transcripts by removing pyrophosphate from the 5'-end of triphosphorylated RNA, leading to a more labile monophosphorylated state that can stimulate subsequent ribonuclease cleavage. This Dechloromonas aromatica (strain RCB) protein is RNA pyrophosphohydrolase.